Consider the following 819-residue polypeptide: Ion-translocating oxidoreductase complex subunit C (819 aa).

4Fe-4S ferredoxin-type domains lie at 368–398 (EYAEPEAEQACIRCSSCSDACPVNLMPQQLY) and 408–437 (KSEEYALKDCIECGICAYVCPSHIPLIQYF). Residues Cys378, Cys381, Cys384, Cys388, Cys417, Cys420, Cys423, and Cys427 each coordinate [4Fe-4S] cluster. Basic and acidic residues-rich tracts occupy residues 465–477 (QARMEREEQERKA) and 485–513 (ARREELAQTKGEDPVKAALERLKAKKANE). Disordered stretches follow at residues 465-568 (QARM…NAKK), 580-677 (AKKL…TALD), and 692-793 (AKKL…PKKA). 2 stretches are compositionally biased toward polar residues: residues 554–565 (VENQEQQTQPTN) and 587–601 (NSTSEAISNSQTAEN). Positions 602–614 (QVEKTKSAVEKTQ) are enriched in basic and acidic residues. Positions 641–656 (QTNSTSEAISNSQTAE) are enriched in polar residues. A compositionally biased stretch (basic and acidic residues) spans 658–671 (EVEKTKSAVEKTEE). Composition is skewed to polar residues over residues 699 to 712 (NSASEAISNSQTAE) and 755 to 768 (NSTSEAISNSQTAE). Residues 770–782 (EVEKTKSAVEKTQ) are compositionally biased toward basic and acidic residues.

This sequence belongs to the 4Fe4S bacterial-type ferredoxin family. RnfC subfamily. In terms of assembly, the complex is composed of six subunits: RnfA, RnfB, RnfC, RnfD, RnfE and RnfG. [4Fe-4S] cluster serves as cofactor.

It localises to the cell inner membrane. Its function is as follows. Part of a membrane-bound complex that couples electron transfer with translocation of ions across the membrane. This Haemophilus influenzae (strain ATCC 51907 / DSM 11121 / KW20 / Rd) protein is Ion-translocating oxidoreductase complex subunit C.